A 65-amino-acid chain; its full sequence is Small, acid-soluble spore protein C3 (65 aa).

Belongs to the alpha/beta-type SASP family.

Its function is as follows. SASP are bound to spore DNA. They are double-stranded DNA-binding proteins that cause DNA to change to an a-like conformation. They protect the DNA backbone from chemical and enzymatic cleavage and are thus involved in dormant spore's high resistance to UV light. This chain is Small, acid-soluble spore protein C3 (SASP-C3), found in Priestia megaterium (Bacillus megaterium).